Consider the following 271-residue polypeptide: Neurexophilin-1 (271 aa).

The first 21 residues, 1–21 (MQAACWYVLLLLQPTVYLVTC), serve as a signal peptide directing secretion. The II stretch occupies residues 22–97 (ANLTNGGKSE…WDWLRNSTDL (76 aa)). Residues N23, N68, N93, N146, N156, and N162 are each glycosylated (N-linked (GlcNAc...) asparagine). The III stretch occupies residues 98–176 (QEPRPRAKRR…LVPPTKIVEF (79 aa)). The tract at residues 177 to 185 (DLAQQTVID) is IV (linker domain). A v (Cys-rich) region spans residues 186-271 (AKDSKSFNCR…HSDTPYFPSG (86 aa)).

The protein belongs to the neurexophilin family. May be proteolytically processed at the boundary between the N-terminal non-conserved and the central conserved domain in neuron-like cells.

It is found in the secreted. Functionally, may be signaling molecules that resemble neuropeptides. Ligand for alpha-neurexins. This is Neurexophilin-1 (NXPH1) from Bos taurus (Bovine).